The following is a 1262-amino-acid chain: Cytoplasmic FMR1-interacting protein homolog (1262 aa).

A disordered region spans residues 519–550 (LNRMTDVKGKKKSSAPKGDSANSSSSDIRIPR).

Belongs to the CYFIP family. In terms of assembly, interacts with gex-3.

The protein localises to the cytoplasm. In terms of biological role, required for initial steps of body morphogenesis. May play a role in egg laying and yolk protein clatherin-mediated endocytosis by oocytes during oogenesis. Plays a role in the formation of muscle connections, also called muscle arm extensions, between the body wall and the motor axons in the dorsal and ventral cord. The sequence is that of Cytoplasmic FMR1-interacting protein homolog from Caenorhabditis elegans.